The primary structure comprises 220 residues: uncharacterized protein (220 aa).

This is an uncharacterized protein from Mycoplasma pneumoniae (strain ATCC 29342 / M129 / Subtype 1) (Mycoplasmoides pneumoniae).